The primary structure comprises 275 residues: Acetyl-coenzyme A carboxylase carboxyl transferase subunit beta (275 aa).

The CoA carboxyltransferase N-terminal domain occupies 18–275 (KDNAGPAVPS…IHRLGGEMHA (258 aa)). The disordered stretch occupies residues 23–47 (PAVPSNTHSSKSNGNPVSEMKENKR). Positions 26 to 38 (PSNTHSSKSNGNP) are enriched in polar residues.

It belongs to the AccD/PCCB family. In terms of assembly, acetyl-CoA carboxylase is a heterohexamer composed of biotin carboxyl carrier protein (AccB), biotin carboxylase (AccC) and two subunits each of ACCase subunit alpha (AccA) and ACCase subunit beta (AccD).

The protein resides in the cytoplasm. It catalyses the reaction N(6)-carboxybiotinyl-L-lysyl-[protein] + acetyl-CoA = N(6)-biotinyl-L-lysyl-[protein] + malonyl-CoA. Its pathway is lipid metabolism; malonyl-CoA biosynthesis; malonyl-CoA from acetyl-CoA: step 1/1. Its function is as follows. Component of the acetyl coenzyme A carboxylase (ACC) complex. Biotin carboxylase (BC) catalyzes the carboxylation of biotin on its carrier protein (BCCP) and then the CO(2) group is transferred by the transcarboxylase to acetyl-CoA to form malonyl-CoA. This Alkaliphilus oremlandii (strain OhILAs) (Clostridium oremlandii (strain OhILAs)) protein is Acetyl-coenzyme A carboxylase carboxyl transferase subunit beta.